A 297-amino-acid polypeptide reads, in one-letter code: Protoheme IX farnesyltransferase 1 (297 aa).

9 helical membrane-spanning segments follow: residues 23–43 (VVVL…RAGV), 45–65 (WSVL…AAVV), 93–113 (LPAL…LLAF), 117–137 (LTAW…TGFL), 145–165 (IVIG…AVSG), 171–191 (PLLL…ALAI), 216–236 (LHIL…YAIH), 241–261 (LYLA…WVLY), and 277–297 (IAYL…LLNL).

Belongs to the UbiA prenyltransferase family. Protoheme IX farnesyltransferase subfamily.

Its subcellular location is the cell inner membrane. The enzyme catalyses heme b + (2E,6E)-farnesyl diphosphate + H2O = Fe(II)-heme o + diphosphate. It participates in porphyrin-containing compound metabolism; heme O biosynthesis; heme O from protoheme: step 1/1. In terms of biological role, converts heme B (protoheme IX) to heme O by substitution of the vinyl group on carbon 2 of heme B porphyrin ring with a hydroxyethyl farnesyl side group. The protein is Protoheme IX farnesyltransferase 1 of Pseudomonas putida (strain GB-1).